We begin with the raw amino-acid sequence, 1462 residues long: DNA polymerase III PolC-type (1462 aa).

Positions Tyr-424–Leu-580 constitute an Exonuclease domain.

This sequence belongs to the DNA polymerase type-C family. PolC subfamily.

The protein resides in the cytoplasm. The catalysed reaction is DNA(n) + a 2'-deoxyribonucleoside 5'-triphosphate = DNA(n+1) + diphosphate. Its function is as follows. Required for replicative DNA synthesis. This DNA polymerase also exhibits 3' to 5' exonuclease activity. This Streptococcus sanguinis (strain SK36) protein is DNA polymerase III PolC-type.